We begin with the raw amino-acid sequence, 746 residues long: MASVLGSGRGSGGLSSQLKCKSKRRRRRRSKRKDKVSILSTFLAPFKYLSPGTTNTEDEDNLSTSSAEVKENRNVSNLGTRPLPPGDWARGGSTPSVKRKRPLEEGNGGHFCKLQLIWKKLSWSMTPKNALVQLHELKPGLQYRMVSQTGPVHAPVFAVAVEVNGLTFEGTGPTKKKAKMRAAEMALKSFVQFPNAFQAHLAMGSSTSPCTDFTSDQADFPDTLFKEFEPSSRNEDFPGCCPVDTEFLSSAYRRGRLLYHTLDLMGQALPDRSRLAPGALGERNPVVVLNELRSGLRYVCLSETAEKPRVKSFVMAVCVDGRTFEGSGRSKKLAKGQAAQAALQALFDIRLPGHIPSRSKSNLLPQDFADSVSQLVTQKFRELTVGLTSVYARHKTLAGIVMTKGLDTKQAQVIVLSSGTKCISGEHISDQGLVVNDCHAEIVARRAFLHFLYTQLELHLSKHQEDPERSIFIRVKEGGYRLRENILFHLYVSTSPCGDARLNSPYEITIDLNSSKHIVRKFRGHLRTKIESGEGTVPVRGPSAVQTWDGILLGEQLVTMSCTDKIASWNVLGLQGALLCHFIEPVYLHSIIVGSLHHTGHLARVMSHRMEGIGQLPASYRQNRPLLSGVSNAEARQPGKSPHFSANWVVGSADLEIINATTGKRSCGGSSRLCKHVFSARWARLHGRLSTRIPGHGDTPSMYCEAKRGAHTYQSVKQQLFKAFQKAGLGTWVRKPPEQDQFLLSL.

Disordered stretches follow at residues 1–36 (MASV…KDKV) and 50–105 (SPGT…PLEE). Basic residues predominate over residues 20–34 (CKSKRRRRRRSKRKD). The R-domain (ssRNA-binding) stretch occupies residues 23–35 (KRRRRRRSKRKDK). 2 consecutive DRBM domains span residues 126–192 (TPKN…SFVQ) and 284–348 (NPVV…ALFD). An A to I editase domain is found at 415–742 (VLSSGTKCIS…VRKPPEQDQF (328 aa)). Residue histidine 439 participates in Zn(2+) binding. Glutamate 441 acts as the Proton donor in catalysis. Positions 497 and 562 each coordinate Zn(2+).

Brain specific.

It is found in the nucleus. Functionally, lacks editing activity. It prevents the binding of other ADAR enzymes to targets in vitro, and decreases the efficiency of these enzymes. Capable of binding to dsRNA but also to ssRNA. The protein is Double-stranded RNA-specific editase B2 (Adarb2) of Rattus norvegicus (Rat).